Consider the following 261-residue polypeptide: Carnitinyl-CoA dehydratase (261 aa).

Glu-111 functions as the Nucleophile in the catalytic mechanism. Glu-131 functions as the Proton acceptor in the catalytic mechanism.

This sequence belongs to the enoyl-CoA hydratase/isomerase family.

The catalysed reaction is (R)-carnitinyl-CoA = crotonobetainyl-CoA + H2O. It participates in amine and polyamine metabolism; carnitine metabolism. Its function is as follows. Catalyzes the reversible dehydration of L-carnitinyl-CoA to crotonobetainyl-CoA. The protein is Carnitinyl-CoA dehydratase of Citrobacter koseri (strain ATCC BAA-895 / CDC 4225-83 / SGSC4696).